Consider the following 447-residue polypeptide: MVLREQEHEPFFIKIDGKWCQIDDAVLRSHPGGSAITTYKNMDATTVFHTFHTGSKEAYQWLTELKKECPTQEPEIPDIKDDPIKGIDDVNMGTFNISEKRSAQINKSFTDLRMRVRAEGLMDGSPLFYIRKILETIFTILFAFYLQYHTYYLPSAILMGVAWQQLGWLIHEFAHHQLFKNRYYNDLASYFVGNFLQGFSSGGWKEQHNVHHAATNVVGRDGDLDLVPFYATVAEHLNNYSQDSWVMTLFRWQHVHWTFMLPFLRLSWLLQSIIFVSQMPTHYYDYYRNTAIYEQVGLSLHWAWSLGQLYFLPDWSTRIMFFLVSHLVGGFLLSHVVTFNHYSVEKFALSSNIMSNYACLQIMTTRNMRPGRFIDWLWGGLNYQIEHHLFPTMPRHNLNTVMPLVKEFAAANGLPYMVDDYFTGFWLEIEQFRNIANVAAKLTKKIA.

The Cytochrome b5 heme-binding domain maps to 1 to 80 (MVLREQEHEP…TQEPEIPDIK (80 aa)). 4 helical membrane passes run 137 to 157 (IFTI…PSAI), 257 to 277 (WTFM…IFVS), 292 to 312 (IYEQ…LYFL), and 319 to 339 (IMFF…VVTF).

It belongs to the fatty acid desaturase type 1 family.

It is found in the membrane. The enzyme catalyses (11Z,14Z)-eicosadienoyl-CoA + 2 Fe(II)-[cytochrome b5] + O2 + 2 H(+) = (5Z,11Z,14Z)-eicosatrienoyl-CoA + 2 Fe(III)-[cytochrome b5] + 2 H2O. It catalyses the reaction (11Z,14Z,17Z)-eicosatrienoyl-CoA + 2 Fe(II)-[cytochrome b5] + O2 + 2 H(+) = (5Z,11Z,14Z,17Z)-eicosatetraenoyl-CoA + 2 Fe(III)-[cytochrome b5] + 2 H2O. It carries out the reaction (8Z,11Z,14Z,17Z)-eicosatetraenoyl-CoA + 2 Fe(II)-[cytochrome b5] + O2 + 2 H(+) = (5Z,8Z,11Z,14Z,17Z)-eicosapentaenoyl-CoA + 2 Fe(III)-[cytochrome b5] + 2 H2O. The catalysed reaction is (8Z,11Z,14Z)-eicosatrienoyl-CoA + 2 Fe(II)-[cytochrome b5] + O2 + 2 H(+) = (5Z,8Z,11Z,14Z)-eicosatetraenoyl-CoA + 2 Fe(III)-[cytochrome b5] + 2 H2O. It functions in the pathway lipid metabolism; polyunsaturated fatty acid biosynthesis. Functionally, can function as a Delta(5) fatty acid desaturase and behaves as a (8-3) desaturase. Introduces a double bond in the fatty acid chain 5 carbons away from carboxy terminal to biosynthesize polyunsaturated fatty acids (PUFAs) endogenously (PUFAs are essential for membrane structure and many cellular and physiological processes). Acts on a variety of substrates such as dihomo-gamma-linoleoyl-CoA ((8Z,11Z,14Z)-eicosatrienoyl-CoA, 20:3n-6) to generate arachidonoyl-CoA ((5Z,8Z,11Z,14Z)-eicosatetraenoyl-CoA, 20:4n-6). Also acts on a number of other substrates, including fatty acids that do not contain a double bond at the 8 position like (11Z,14Z,17Z)-eicosatrienoyl-CoA (20:3n-3) to produce (5Z,11Z,14Z,17Z)-eicosatetraenoyl-CoA (20:4n-3). Unlike plants, Caenorhabditis elegans desaturases seem to use fatty acyl-CoAs as substrates. This Caenorhabditis elegans protein is Delta(5) fatty acid desaturase fat-4 (fat-4).